We begin with the raw amino-acid sequence, 366 residues long: Pyrimidine monooxygenase RutA (366 aa).

Residues 49–50 (IK), asparagine 115, glutamate 124, 140–141 (RY), and serine 190 each bind FMN.

It belongs to the NtaA/SnaA/DszA monooxygenase family. RutA subfamily.

The enzyme catalyses uracil + FMNH2 + NADH + O2 = (Z)-3-ureidoacrylate + FMN + NAD(+) + H2O + H(+). It carries out the reaction thymine + FMNH2 + NADH + O2 = (Z)-2-methylureidoacrylate + FMN + NAD(+) + H2O + H(+). Its function is as follows. Catalyzes the pyrimidine ring opening between N-3 and C-4 by an unusual flavin hydroperoxide-catalyzed mechanism, adding oxygen atoms in the process to yield ureidoacrylate peracid, that immediately reacts with FMN forming ureidoacrylate and FMN-N(5)-oxide. The FMN-N(5)-oxide reacts spontaneously with NADH to produce FMN. Requires the flavin reductase RutF to regenerate FMN in vivo. The chain is Pyrimidine monooxygenase RutA from Serratia proteamaculans (strain 568).